We begin with the raw amino-acid sequence, 832 residues long: Translation initiation factor IF-2 (832 aa).

Residues M1–G10 are compositionally biased toward basic and acidic residues. 3 disordered regions span residues M1–A87, R120–A148, and I163–G201. Gly residues predominate over residues G11 to G20. 2 stretches are compositionally biased toward polar residues: residues R29–G42 and S71–A87. Residues P331–R500 enclose the tr-type G domain. Residues G340–T347 are G1. G340–T347 is a GTP binding site. The interval G365 to H369 is G2. The G3 stretch occupies residues D386–G389. GTP contacts are provided by residues D386–H390 and N440–D443. The G4 stretch occupies residues N440–D443. Residues S476–K478 form a G5 region.

The protein belongs to the TRAFAC class translation factor GTPase superfamily. Classic translation factor GTPase family. IF-2 subfamily.

The protein resides in the cytoplasm. In terms of biological role, one of the essential components for the initiation of protein synthesis. Protects formylmethionyl-tRNA from spontaneous hydrolysis and promotes its binding to the 30S ribosomal subunits. Also involved in the hydrolysis of GTP during the formation of the 70S ribosomal complex. The sequence is that of Translation initiation factor IF-2 from Anaplasma marginale (strain St. Maries).